The following is a 1162-amino-acid chain: Enhanced level of genomic instability 1 (1162 aa).

Disordered regions lie at residues 1 to 136, 144 to 163, 179 to 202, 249 to 319, 348 to 380, 611 to 634, and 666 to 697; these read MTDV…ADNQ, KAGK…KPKP, LGVN…ATPT, KTDA…TKKR, METP…RRSC, RSME…PNGE, and WSGN…SSSN. The segment covering 65–78 has biased composition (basic residues); it reads KQKHREKHKRKREE. Basic and acidic residues predominate over residues 79–111; that stretch reads KRRAALMEDQKSTTEEVKANAKEKPQPLREKSS. Positions 125–136 are enriched in polar residues; that stretch reads PLKSSTPVADNQ. Positions 268-278 are enriched in basic residues; it reads KRLRGRPRSRR. Low complexity-rich tracts occupy residues 666–676 and 684–697; these read WSGNGGSNRNS and DMSN…SSSN. 703 to 710 contributes to the ATP binding site; sequence GPSSSGKT. Disordered regions lie at residues 900–923 and 975–1008; these read GDST…SRLA and QAAG…SDGH. The segment covering 984–993 has biased composition (basic residues); sequence AAKRKSRSPK. The span at 998-1008 shows a compositional bias: polar residues; that stretch reads SSATGQKSDGH.

This sequence belongs to the ELG1 family. In terms of assembly, component of a heteropentameric Elg1 RFC-like complex composed of one large subunit (elg1) and four small subunits (RfC4, RfC38, CG8142 and RfC3). As part of the complex, might interact with the Enok complex, composed of enok, Br140, Eaf6 and Ing5. Within the Enok complex, interacts directly with Br140. In terms of tissue distribution, expressed at higher levels in the germline nurse cells than in the somatic follicle cells.

It is found in the nucleus. In terms of biological role, has an important role in DNA replication and in maintaining genome integrity during replication stress. Promotes PCNA deubiquitination. As component of the Elg1 RFC-like complex, regulates the functions of the DNA polymerase processivity factor PCNA by unloading it from DNA after replication during the S phase of the cell cycle. The PCNA-unloading might be regulated via interaction with the Enok acetyltransferase complex. Might have a role in restarting of stalled/regressed replication forks during replication stress. In the ovaries, has a role in nurse cell endoreplication. This chain is Enhanced level of genomic instability 1, found in Drosophila melanogaster (Fruit fly).